The following is a 113-amino-acid chain: Thioredoxin H-type (113 aa).

One can recognise a Thioredoxin domain in the interval 2–112 (GGSVIVIDSK…LKALVAKHAA (111 aa)). Active-site nucleophile residues include C37 and C40. A disulfide bridge links C37 with C40.

It belongs to the thioredoxin family. Plant H-type subfamily.

The protein resides in the cytoplasm. In terms of biological role, participates in various redox reactions through the reversible oxidation of the active center dithiol to a disulfide. The H form is known to activate a number of cytosolic enzymes. The chain is Thioredoxin H-type (TRXH) from Chlamydomonas reinhardtii (Chlamydomonas smithii).